The primary structure comprises 256 residues: Isoprenyl transferase (256 aa).

The interval 1–22 (MLEKFSKWKGNRSNHTTPSHSL) is disordered. Residue D36 is part of the active site. D36 provides a ligand contact to Mg(2+). Substrate is bound by residues 37-40 (GNGR), W41, R49, H53, and 81-83 (STE). N84 acts as the Proton acceptor in catalysis. Residues W85, R87, R204, and 210–212 (RLS) contribute to the substrate site. E223 is a Mg(2+) binding site.

Belongs to the UPP synthase family. In terms of assembly, homodimer. The cofactor is Mg(2+).

Its function is as follows. Catalyzes the condensation of isopentenyl diphosphate (IPP) with allylic pyrophosphates generating different type of terpenoids. This Halalkalibacterium halodurans (strain ATCC BAA-125 / DSM 18197 / FERM 7344 / JCM 9153 / C-125) (Bacillus halodurans) protein is Isoprenyl transferase.